We begin with the raw amino-acid sequence, 637 residues long: Phosphomethylpyrimidine synthase (637 aa).

Substrate is bound by residues Asn-242, Met-271, Tyr-300, His-336, 356 to 358 (SRG), 397 to 400 (DGLR), and Glu-436. Residue His-440 coordinates Zn(2+). Residue Tyr-463 coordinates substrate. His-504 contributes to the Zn(2+) binding site. Positions 584, 587, and 592 each coordinate [4Fe-4S] cluster.

Belongs to the ThiC family. Homodimer. It depends on [4Fe-4S] cluster as a cofactor.

The catalysed reaction is 5-amino-1-(5-phospho-beta-D-ribosyl)imidazole + S-adenosyl-L-methionine = 4-amino-2-methyl-5-(phosphooxymethyl)pyrimidine + CO + 5'-deoxyadenosine + formate + L-methionine + 3 H(+). The protein operates within cofactor biosynthesis; thiamine diphosphate biosynthesis. Functionally, catalyzes the synthesis of the hydroxymethylpyrimidine phosphate (HMP-P) moiety of thiamine from aminoimidazole ribotide (AIR) in a radical S-adenosyl-L-methionine (SAM)-dependent reaction. The polypeptide is Phosphomethylpyrimidine synthase (Bordetella pertussis (strain Tohama I / ATCC BAA-589 / NCTC 13251)).